Consider the following 329-residue polypeptide: GTPase Obg (329 aa).

Residues 1–159 (MQFIDQARIS…WPLQLELKLL (159 aa)) enclose the Obg domain. The OBG-type G domain maps to 160–328 (AEVGIIGLPN…MLDRVWSELG (169 aa)). ATP-binding positions include 166–173 (GLPNAGKS), 191–195 (FTTLI), 213–216 (DIPG), 280–283 (NKQE), and 309–311 (SAA). 2 residues coordinate Mg(2+): Ser173 and Thr193.

This sequence belongs to the TRAFAC class OBG-HflX-like GTPase superfamily. OBG GTPase family. In terms of assembly, monomer. The cofactor is Mg(2+).

It is found in the cytoplasm. In terms of biological role, an essential GTPase which binds GTP, GDP and possibly (p)ppGpp with moderate affinity, with high nucleotide exchange rates and a fairly low GTP hydrolysis rate. Plays a role in control of the cell cycle, stress response, ribosome biogenesis and in those bacteria that undergo differentiation, in morphogenesis control. This is GTPase Obg from Synechococcus sp. (strain CC9311).